A 564-amino-acid polypeptide reads, in one-letter code: Ribulokinase (564 aa).

Belongs to the ribulokinase family.

It catalyses the reaction D-ribulose + ATP = D-ribulose 5-phosphate + ADP + H(+). It carries out the reaction L-ribulose + ATP = L-ribulose 5-phosphate + ADP + H(+). It functions in the pathway carbohydrate degradation; L-arabinose degradation via L-ribulose; D-xylulose 5-phosphate from L-arabinose (bacterial route): step 2/3. The sequence is that of Ribulokinase from Anoxybacillus flavithermus (strain DSM 21510 / WK1).